We begin with the raw amino-acid sequence, 1150 residues long: MSIRFIYGRAGSGKSHYCLEDIKRRIQEVNDRNLILLVPEQFSFQAEKNLIKSIGEKGTLKAQVLSFRRMAEKVFDEVGGGIKKYINDAGKNILLYKIIEENKNKLKVYKTSAKKQGFVNLVSDIIGEFKKYNISPEFLKENLDSIENKSLKNKLEDIGMLFLEFQNRLSKNYIDLEDTLHILCEKLDKSIIFKNSEVWIDEFSTFTPQEYSIIEKIMCSAYRVNITLCMDALGEYSERESIDLFLPIKITERNILQIAEKNNIIYQKPVNLRCSPCYRFKNSTALQHLQHSLFSYPYKNYEKSTEDINIFKALNKYTEIDYIARDIVKACRDKNLRFKDMAVVTGDLDEYENLIKAVFNQYDIPYFIDKKREIIHNQIVILIISAVEILAKNWSYESVFRYLKTGLLDLEFDDIDILENYVLANGIRGRQWLDTKPWSFKINYGNFKEDDSEEEQEYLNKINCIRDKVREPILKLSNDIKGKKKGRHICEELYNFLCELKIPEKVEELIIEFRNTDRLDKANEYSQIWDIVVDVLDQIVDVLGEQSFGMEIFNEALEIGFSQYEIGVIPPALDQVLVSNITRIKSYNISALYIAGVNDGIFPVTISPEGIFTDQDRDELKQNGLEIAPNTRSRAFEEQFLIYATLTIVDKYLTLTYSMSDEEGKAKRPSVVISMIKKIFPKLQEKSNLLDASGYEGGIEAVNSPKVTFNMLISNIRRNLGHRENINSLWIDVYRWYREHEIWNKRLDTVLGAFYYNNEIKISDLVKIRRLYGKHLNMSVSRLEKFAQCPFGYFVQYGLKVKDRKMYSLSAPDLGSFMHGILERFSIGLKQKSLTWENVDERCCEENINDLVDNVLYDNPNSILNSSKKYKHVTDKLKKTLTRSVWLIAQHMKKGRFIPRAYELVFGEIGDFPPISIELDSGEKVSLTGKVDRVDTAKEDIITYIRIVDYKSGTREFKLSDVYYGFQLQLLIYLDAILTEFDKMTKGKSIPAGLLYFKLEDPIVRTKENIPDHEIEDRITKSLKMNGLLLNDVNVIRQMDTSMEKSSDIISVSIKKDGNLSKSKSSLATRKQFEILRKYVRSTIADLCKKILTGNIEVTPYKNKTKNGCSYCEYSAICQFDTSIKGNKYRIIEDKSDEEIWKHIENKVQE.

8-15 (GRAGSGKS) contacts ATP. [4Fe-4S] cluster contacts are provided by cysteine 789, cysteine 1109, cysteine 1112, and cysteine 1118.

The protein belongs to the helicase family. AddB/RexB type 1 subfamily. In terms of assembly, heterodimer of AddA and AddB. Requires Mg(2+) as cofactor. It depends on [4Fe-4S] cluster as a cofactor.

In terms of biological role, the heterodimer acts as both an ATP-dependent DNA helicase and an ATP-dependent, dual-direction single-stranded exonuclease. Recognizes the chi site generating a DNA molecule suitable for the initiation of homologous recombination. The AddB subunit has 5' -&gt; 3' nuclease activity but not helicase activity. This is ATP-dependent helicase/deoxyribonuclease subunit B from Clostridium kluyveri (strain NBRC 12016).